A 196-amino-acid chain; its full sequence is Autophagy-related protein 31 (196 aa).

The segment at 20-45 (IKNNKGPSNDDQPAYNNESKSTDGSD) is disordered. The segment covering 22–43 (NNKGPSNDDQPAYNNESKSTDG) has biased composition (polar residues). Phosphoserine occurs at positions 38 and 40. At Thr41 the chain carries Phosphothreonine. Ser44 and Ser116 each carry phosphoserine. The span at 120-129 (EENQMRTLSS) shows a compositional bias: polar residues. Positions 120 to 145 (EENQMRTLSSHGDDKSNDEEEELSVD) are disordered. Phosphoserine occurs at positions 135, 143, 146, 153, 174, and 195. Acidic residues predominate over residues 135–144 (SNDEEEELSV).

Forms a stable complex with ATG17 and ATG29. Interacts directly with ATG29. The ATG17-ATG29-ATG31 complex interacts with the ATG1-ATG13 complex. Note=The interaction with the ATG1-ATG13 complex is induced by starvation. Post-translationally, highly phosphorylated. Ser-174 is phosphorylated constitutively. Phosphorylation at Ser-174 is required for autophagy induced by various autophagy stimuli such as nitrogen starvation and rapamycin treatment.

The protein localises to the cytoplasm. The protein resides in the cytoskeleton. It localises to the preautophagosomal structure. Functionally, plays a role in starvation-induced autophagy. Involved in mitophagy. Functions with ATG17 and ATG29 at the preautophagosomal structure (PAS) in order to form normal autophagosomes under starvation conditions. May be involved in microtubule function, such as chromosome segregation and karyogamy. In Saccharomyces cerevisiae (strain ATCC 204508 / S288c) (Baker's yeast), this protein is Autophagy-related protein 31 (ATG31).